Reading from the N-terminus, the 170-residue chain is MNKKDKKKAPQKVAKVLHPLSRKAKKLTLEGIRDIKKEKNANIRKKEQKPIKQLLDHFQEIVKKENKKIFTESEVSDIIDQFLKTKTPEEEIKQVTSRTNKLEFTKSQHNDEIKEFKNNGYSVPDLTNANYVRFLLNWDGDMKYITQQSLPLKKFKYIEQPKNEMETDSK.

It belongs to the TMA16 family.

The chain is Translation machinery-associated protein 16 homolog from Dictyostelium discoideum (Social amoeba).